Here is a 65-residue protein sequence, read N- to C-terminus: U15-hexatoxin-Mg1a (65 aa).

In terms of processing, contains 4 disulfide bonds. As to expression, expressed by the venom gland.

The protein resides in the secreted. Its function is as follows. Intrathorax injection into crickets causes paralysis prolonged for more than 60 minutes, followed by recovery. In Macrothele gigas (Japanese funnel web spider), this protein is U15-hexatoxin-Mg1a.